The chain runs to 1150 residues: MAVPARTCGASRPGPARTARPWPGCGPHPGPGTRRPTSGPPRPLWLLLPLLPLLAAPGASAYSFPQQHTMQHWARRLEQEVDGVMRIFGGVQQLREIYKDNRNLFEVQENEPQKLVEKVAGDIESLLDRKVQALKRLADAAENFQKAHRWQDNIKEEDIVYYDAKADAELDDPESEDVERGSKASTLRLDFIEDPNFKNKVNYSYAAVQIPTDIYKGSTVILNELNWTEALENVFMENRRQDPTLLWQVFGSATGVTRYYPATPWRAPKKIDLYDVRRRPWYIQGASSPKDMVIIVDVSGSVSGLTLKLMKTSVCEMLDTLSDDDYVNVASFNEKAQPVSCFTHLVQANVRNKKVFKEAVQGMVAKGTTGYKAGFEYAFDQLQNSNITRANCNKMIMMFTDGGEDRVQDVFEKYNWPNRTVRVFTFSVGQHNYDVTPLQWMACANKGYYFEIPSIGAIRINTQEYLDVLGRPMVLAGKEAKQVQWTNVYEDALGLGLVVTGTLPVFNLTQDGPGEKKNQLILGVMGIDVALNDIKRLTPNYTLGANGYVFAIDLNGYVLLHPNLKPQTTNFREPVTLDFLDAELEDENKEEIRRSMIDGNKGHKQIRTLVKSLDERYIDEVTRNYTWVPIRSTNYSLGLVLPPYSTFYLQANLSDQILQVKLPISKLKDFEFLLPSSFESEGHVFIAPREYCKDLNASDNNTEFLKNFIELMEKVTPDSKQCNNFLLHNLILDTGITQQLVERVWRDQDLNTYSLLAVFAATDGGITRVFPNKAAEDWTENPEPFNASFYRRSLDNHGYVFKPPHQDALLRPLELENDTVGILVSTAVELSLGRRTLRPAVVGVKLDLEAWAEKFKVLASNRTHQDQPQKCGPNSHCEMDCEVNNEDLLCVLIDDGGFLVLSNQNHQWDQVGRFFSEVDANLMLALYNNSFYTRKESYDYQAACAPQPPGNLGAAPRGVFVPTVADFLNLAWWTSAAAWSLFQQLLYGLIYHSWFQADPAEAEGSPETRESSCVMKQTQYYFGSVNASYNAIIDCGNCSRLFHAQRLTNTNLLFVVAEKPLCSQCEAGRLLQKETHSDGPEQCELVQRPRYRRGPHICFDYNATEDTSDCGRGASFPPSLGVLVSLQLLLLLGLPPRPQPQVLVHASRRL.

The first 18 residues, 1 to 18 (MAVPARTCGASRPGPART), serve as a signal peptide directing secretion. The interval 1 to 41 (MAVPARTCGASRPGPARTARPWPGCGPHPGPGTRRPTSGPP) is disordered. The Extracellular portion of the chain corresponds to 19–1113 (ARPWPGCGPH…TEDTSDCGRG (1095 aa)). Residues 291–469 (DMVIIVDVSG…INTQEYLDVL (179 aa)) form the VWFA domain. A divalent metal cation contacts are provided by aspartate 297, serine 299, and serine 301. The MIDAS-like motif motif lies at 297–301 (DVSGS). N-linked (GlcNAc...) asparagine glycans are attached at residues asparagine 386, asparagine 418, asparagine 507, asparagine 540, asparagine 624, and asparagine 861. A disulfide bridge connects residues cysteine 443 and cysteine 1098. In terms of domain architecture, Cache spans 485 to 574 (WTNVYEDALG…KPQTTNFREP (90 aa)). The chain crosses the membrane as a helical span at residues 1114–1134 (ASFPPSLGVLVSLQLLLLLGL). The Cytoplasmic portion of the chain corresponds to 1135-1150 (PPRPQPQVLVHASRRL).

It belongs to the calcium channel subunit alpha-2/delta family. In terms of assembly, dimer formed of alpha-2-2 and delta-2 chains; disulfide-linked. Voltage-dependent calcium channels are multisubunit complexes, consisting of alpha-1 (CACNA1), alpha-2 (CACNA2D), beta (CACNB) and delta (CACNA2D) subunits in a 1:1:1:1 ratio. In terms of processing, may be proteolytically processed into subunits alpha-2-2 and delta-2 that are disulfide-linked. It is however unclear whether such cleavage really takes place in vivo and has a functional role. Predominantly present in cerebellar cortex. Present in various lung tumor cell lines, while it is absent in normal lung (at protein level). Highly expressed in heart, lung, testis, pancreas and skeletal muscle. Also expressed in kidney, liver, placenta and brain.

Its subcellular location is the membrane. The alpha-2/delta subunit of voltage-dependent calcium channels regulates calcium current density and activation/inactivation kinetics of the calcium channel. Acts as a regulatory subunit for P/Q-type calcium channel (CACNA1A), N-type (CACNA1B), L-type (CACNA1C OR CACNA1D) and possibly T-type (CACNA1G). Overexpression induces apoptosis. The sequence is that of Voltage-dependent calcium channel subunit alpha-2/delta-2 (CACNA2D2) from Homo sapiens (Human).